The following is a 205-amino-acid chain: Small ribosomal subunit protein uS4 (205 aa).

Residues 1 to 16 are compositionally biased toward basic and acidic residues; that stretch reads MSKRESSKYKIDRRMG. Positions 1-46 are disordered; sequence MSKRESSKYKIDRRMGENIWGRPKSPVNRREYGPGQHGQRRKGKLS. Residues 94 to 157 enclose the S4 RNA-binding domain; sequence SRLDAIVYRA…KQLVIVLESV (64 aa).

The protein belongs to the universal ribosomal protein uS4 family. In terms of assembly, part of the 30S ribosomal subunit. Contacts protein S5. The interaction surface between S4 and S5 is involved in control of translational fidelity.

One of the primary rRNA binding proteins, it binds directly to 16S rRNA where it nucleates assembly of the body of the 30S subunit. Functionally, with S5 and S12 plays an important role in translational accuracy. This is Small ribosomal subunit protein uS4 from Rhizobium rhizogenes (strain K84 / ATCC BAA-868) (Agrobacterium radiobacter).